Reading from the N-terminus, the 443-residue chain is Phosphoglucosamine mutase (443 aa).

Catalysis depends on serine 101, which acts as the Phosphoserine intermediate. The Mg(2+) site is built by serine 101, aspartate 239, aspartate 241, and aspartate 243. At serine 101 the chain carries Phosphoserine.

Belongs to the phosphohexose mutase family. The cofactor is Mg(2+). In terms of processing, activated by phosphorylation.

The enzyme catalyses alpha-D-glucosamine 1-phosphate = D-glucosamine 6-phosphate. In terms of biological role, catalyzes the conversion of glucosamine-6-phosphate to glucosamine-1-phosphate. This chain is Phosphoglucosamine mutase, found in Francisella tularensis subsp. tularensis (strain WY96-3418).